We begin with the raw amino-acid sequence, 34 residues long: Mu-theraphotoxin-Df1a (34 aa).

Intrachain disulfides connect C2-C16, C9-C21, and C15-C28. A Phenylalanine amide modification is found at F34.

Belongs to the neurotoxin 10 (Hwtx-1) family. 54 (ProTx-1) subfamily. C-terminal amidation is important for the high potency of the toxin. As to expression, expressed by the venom gland.

Its subcellular location is the secreted. Inhibits sodium channel Nav1.7/SCN9A with high potency (IC(50)=117 nM) and Nav1.2/SCN2A, Nav1.3/SCN3A, Nav1.6/SCN8A and Nav1.5/SCN5 with weaker potency. Also inhibits voltage-gated calcium channel Cav3.1/CACNA1G, Cav3.2/CACNA1H and Cav3.3/CACNA1I. This chain is Mu-theraphotoxin-Df1a, found in Davus fasciatus (Costa Rican tiger rump).